Consider the following 160-residue polypeptide: MNDLPFWKRKTLAEMTVAEWESLCDGCGLCCLNKIEEWDSGDIYFTSVSCKLLDGESCRCSSYENRWDFVPDCVQLTKENVPDIAWLPPTCGYRLVNEGRDLYWWHPLISGDPETVHAAGISARGRTINENEIDIDDLEDYVVDWPLTVGEEKDEEEEEA.

The protein belongs to the UPF0260 family.

This chain is UPF0260 protein Rleg2_0895, found in Rhizobium leguminosarum bv. trifolii (strain WSM2304).